The chain runs to 840 residues: Phosphatidylglycerol lysyltransferase (840 aa).

Residues 1 to 8 (MNQEVKNK) are Cytoplasmic-facing. The helical transmembrane segment at 9–29 (IFSILKITFATALFIFVVITL) threads the bilayer. Residues 30 to 52 (YRELSGINFKDTLVEFSKINRMS) are Extracellular-facing. The chain crosses the membrane as a helical span at residues 53–73 (LVLLFIGGGASLVILSMYDVI). The Cytoplasmic portion of the chain corresponds to 74–89 (LSRALKMDISLGKVLR). The chain crosses the membrane as a helical span at residues 90-110 (VSYIINALNAIVGFGGFIGAG). The Extracellular segment spans residues 111 to 128 (VRAMVYKNYTHDKKKLVH). A helical membrane pass occupies residues 129–149 (FISLILISMLTGLSLLSLLIV). The Cytoplasmic segment spans residues 150 to 161 (FHVFDASLILDK). Residues 162–182 (ITWVRWVLYVVSFFLPLFIIY) traverse the membrane as a helical segment. At 183 to 200 (SMVRPPDKNNRFVGLYCT) the chain is on the extracellular side. Residues 201 to 221 (LVSCVEWLAAAVVLYFCGVIV) form a helical membrane-spanning segment. Topologically, residues 222–229 (DAHVSFMS) are cytoplasmic. The helical transmembrane segment at 230 to 250 (FIAIFIIAALSGLVSFIPGGF) threads the bilayer. Over 251–271 (GAFDLVVLLGFKTLGVPEEKV) the chain is Extracellular. A helical transmembrane segment spans residues 272-292 (LLMLLLYRFAYYFVPVIIALI). The Cytoplasmic segment spans residues 293-337 (LSSFEFGTSAKKYIEGSKYFIPAKDVTSFLMSYQKDIIAKIPSLS). A helical transmembrane segment spans residues 338-358 (LAILVFFTSMIFFVNNLTIVY). Residues 359–369 (DALYDGNHLTY) are Extracellular-facing. The helical transmembrane segment at 370–390 (YILLAIHTSACLLLLLNVVGI) threads the bilayer. Topologically, residues 391–394 (YKQS) are cytoplasmic. The next 2 membrane-spanning stretches (helical) occupy residues 395–415 (RRAI…TFFT) and 416–436 (YASY…IVAF). Residues 437-450 (RRARRLKRPVRMRN) lie on the Cytoplasmic side of the membrane. Residues 451–471 (IVAMLLFSLFILYVNHIFIAG) form a helical membrane-spanning segment. Residues 472–489 (TLYALDIYTIEMHTSVLR) lie on the Extracellular side of the membrane. Residues 490 to 510 (YYFWLTILIIAIIIGMIAWLF) form a helical membrane-spanning segment. Residues 511–840 (DYQFSKVRIS…SKVMRVIRHK (330 aa)) are Cytoplasmic-facing.

This sequence belongs to the LPG synthase family.

It is found in the cell membrane. The catalysed reaction is L-lysyl-tRNA(Lys) + a 1,2-diacyl-sn-glycero-3-phospho-(1'-sn-glycerol) = a 1,2-diacyl-sn-glycero-3-phospho-1'-(3'-O-L-lysyl)-sn-glycerol + tRNA(Lys). Catalyzes the transfer of a lysyl group from L-lysyl-tRNA(Lys) to membrane-bound phosphatidylglycerol (PG), which produces lysylphosphatidylglycerol (LPG), a major component of the bacterial membrane with a positive net charge. LPG synthesis contributes to bacterial virulence as it is involved in the resistance mechanism against cationic antimicrobial peptides (CAMP) produces by the host's immune system (defensins, cathelicidins) and by the competing microorganisms (bacteriocins). In fact, the modification of anionic phosphatidylglycerol with positively charged L-lysine results in repulsion of the peptides. In Staphylococcus aureus (strain MSSA476), this protein is Phosphatidylglycerol lysyltransferase (mprF).